Consider the following 365-residue polypeptide: tRNA(Met) cytidine acetate ligase (365 aa).

Residues Ile7 to Leu20, Gly96, Asn152, and Arg175 each bind ATP.

The protein belongs to the TmcAL family.

It is found in the cytoplasm. It catalyses the reaction cytidine(34) in elongator tRNA(Met) + acetate + ATP = N(4)-acetylcytidine(34) in elongator tRNA(Met) + AMP + diphosphate. In terms of biological role, catalyzes the formation of N(4)-acetylcytidine (ac(4)C) at the wobble position of elongator tRNA(Met), using acetate and ATP as substrates. First activates an acetate ion to form acetyladenylate (Ac-AMP) and then transfers the acetyl group to tRNA to form ac(4)C34. The protein is tRNA(Met) cytidine acetate ligase of Streptococcus pneumoniae (strain ATCC BAA-255 / R6).